Here is a 166-residue protein sequence, read N- to C-terminus: Ribosome maturation factor RimM (166 aa).

Positions Glu-90–Trp-163 constitute a PRC barrel domain.

This sequence belongs to the RimM family. In terms of assembly, binds ribosomal protein uS19.

Its subcellular location is the cytoplasm. An accessory protein needed during the final step in the assembly of 30S ribosomal subunit, possibly for assembly of the head region. Essential for efficient processing of 16S rRNA. May be needed both before and after RbfA during the maturation of 16S rRNA. It has affinity for free ribosomal 30S subunits but not for 70S ribosomes. The protein is Ribosome maturation factor RimM of Clostridium acetobutylicum (strain ATCC 824 / DSM 792 / JCM 1419 / IAM 19013 / LMG 5710 / NBRC 13948 / NRRL B-527 / VKM B-1787 / 2291 / W).